Here is a 602-residue protein sequence, read N- to C-terminus: Multicopper oxidase aurL2 (602 aa).

Residues 1 to 17 (MLFRFLALLPFVAGAFA) form the signal peptide. Plastocyanin-like domains follow at residues 38–149 (DIKI…VRDA) and 160–317 (IPLL…KYRC). N52 and N80 each carry an N-linked (GlcNAc...) asparagine glycan. Positions 84, 86, 130, and 132 each coordinate Cu cation. N201, N247, N337, N383, N387, N419, and N424 each carry an N-linked (GlcNAc...) asparagine glycan. In terms of domain architecture, Plastocyanin-like 3 spans 421–556 (TTPNYTLALE…QVMGMATVWV (136 aa)). H469 serves as a coordination point for Cu cation. 2 N-linked (GlcNAc...) asparagine glycosylation sites follow: N482 and N486.

Belongs to the multicopper oxidase family.

It functions in the pathway pigment biosynthesis. Functionally, multicopper oxidase; part of the gene cluster that mediates the biosynthesis of aurofusarin, a red mycelium pigment which is acting as a mycotoxin. The first step is performed by the polyketide synthase which condenses one acetyl-CoA and 6 malonyl-CoA units to form the first intermediate, the cyclic heptaketide and yellow pigment YWA1. The C2 hydroxyl group in the pyrone ring of YWA1 is probably formed during ring closure by an aldol-type cyclization reaction. The dehydratase aurZ then acts as the first tailoring enzyme in the aurofusarin biosynthetic pathway by converting YWA1 to nor-rubrofusarin. Nor-rubrofusarin is then methylated to rubrofusarin by the O-methyltransferase aurJ. Rubrofusarin is then transported across the plasma membrane by the rubrofusarin-specific pump aurT for further enzymatic processing by the extracellular complex composed of GIP1, aurF, aurO and aurS to yield aurofusarin. The sequence is that of Multicopper oxidase aurL2 (aurL2) from Gibberella zeae (strain ATCC MYA-4620 / CBS 123657 / FGSC 9075 / NRRL 31084 / PH-1) (Wheat head blight fungus).